A 590-amino-acid polypeptide reads, in one-letter code: MKRTNYAGNITEEYLNQTVTVKGWVAKRRNLGGLIFIDLRDREGIVQIVVNPETAAADVAEAADKARNEFVLEVTGKVVERASKNDKIKTGGIEIEATAIEILSTSKTTPFEIKDDVEVLDDTRLKYRYLDLRRPEMLKNITMRHATTRSIREYLDGAGFIDVETPFLNKSTPEGARDYLVPSRVNKGEFYALPQSPQLMKQLLMTAGLDRYYQIVKCFRDEDLRGDRQPEFTQVDLETSFLSEEEIQDLTEELIAKVMKDVKGIDVTLPFPRMKYDDAMNFYGSDKPDTRFELLLTDLSALAKTIDFKVFQEAEVVKAIVVKDAADKYSRKSIDKLTEQAKQNGAKGLAWVKFEKGEFAGGVSKFLAESTDSFVNELKLTDNDLVLFVADSLDVANSALGALRLTIGKQQGLIDFRQFNFLWVIDWPMFEWSDEEERYMSAHHPFTLPTKETQAFLSADGHSKDSDLKKVRAHAYDIVLNGYELGGGSLRINTRQLQEEMLSALGFKLEDANEQFGFLLEALDYGFPPHGGLALGLDRFVMLLAGKDNIREVIAFPKNNKASDPMTQAPSIVAEKQLEELSIKLANKDQ.

Residue Glu-174 coordinates L-aspartate. The aspartate stretch occupies residues 198–201 (QLMK). Arg-220 lines the L-aspartate pocket. ATP contacts are provided by residues 220-222 (RDE) and Gln-229. Residue His-443 participates in L-aspartate binding. Residue Glu-484 coordinates ATP. Position 491 (Arg-491) interacts with L-aspartate. 536-539 (GLDR) contributes to the ATP binding site.

It belongs to the class-II aminoacyl-tRNA synthetase family. Type 1 subfamily. As to quaternary structure, homodimer.

The protein localises to the cytoplasm. The enzyme catalyses tRNA(Asp) + L-aspartate + ATP = L-aspartyl-tRNA(Asp) + AMP + diphosphate. In terms of biological role, catalyzes the attachment of L-aspartate to tRNA(Asp) in a two-step reaction: L-aspartate is first activated by ATP to form Asp-AMP and then transferred to the acceptor end of tRNA(Asp). This Lactococcus lactis subsp. lactis (strain IL1403) (Streptococcus lactis) protein is Aspartate--tRNA ligase.